Here is a 197-residue protein sequence, read N- to C-terminus: Beta-crystallin A2 (197 aa).

An N-terminal arm region spans residues 1-11 (MSGTLSQGSSP). Beta/gamma crystallin 'Greek key' domains lie at 12–52 (ARLT…KVES) and 53–99 (GAWV…RPLL). The interval 100–105 (CANHSD) is connecting peptide. Beta/gamma crystallin 'Greek key' domains follow at residues 106–147 (SRVT…KVTS) and 148–196 (GAWV…RRVQ).

This sequence belongs to the beta/gamma-crystallin family. As to quaternary structure, homo/heterodimer, or complexes of higher-order. The structure of beta-crystallin oligomers seems to be stabilized through interactions between the N-terminal arms.

Its function is as follows. Crystallins are the dominant structural components of the vertebrate eye lens. The sequence is that of Beta-crystallin A2 (CRYBA2) from Macropus fuliginosus (Western gray kangaroo).